The following is a 356-amino-acid chain: S-adenosylmethionine:tRNA ribosyltransferase-isomerase (356 aa).

This sequence belongs to the QueA family. In terms of assembly, monomer.

Its subcellular location is the cytoplasm. It catalyses the reaction 7-aminomethyl-7-carbaguanosine(34) in tRNA + S-adenosyl-L-methionine = epoxyqueuosine(34) in tRNA + adenine + L-methionine + 2 H(+). Its pathway is tRNA modification; tRNA-queuosine biosynthesis. In terms of biological role, transfers and isomerizes the ribose moiety from AdoMet to the 7-aminomethyl group of 7-deazaguanine (preQ1-tRNA) to give epoxyqueuosine (oQ-tRNA). This is S-adenosylmethionine:tRNA ribosyltransferase-isomerase from Salmonella arizonae (strain ATCC BAA-731 / CDC346-86 / RSK2980).